We begin with the raw amino-acid sequence, 638 residues long: MTEKTIRLTTAQALVKFLNQQYIEVDDEMAPFVDGIFTVFGHGNVVGIGQALEEDPGHLNVYQGKNEQGMAHAAIAYAKQKNRKRIYACSASAGPGSANLITAASTALANNLPVLFLPADTFATRQPDPVLQQLEHESSAAITTNDGFQAVSRYFDRVQRPEQLMSALIRAFEVMTNPASAGPATICIAQDTEGEAFDYPVEFFQKRIHYLNRQIPTKRELTEAARLIQASKTPVIIVGGGARYSDAREELIALSEQSNIPLVETHAGKSTVEFDFKNNLGGTGILGTLAANKAIRDADLVIGIGTRYTDFTTSSKTAFGPATKFININVSRMQTYKLDAFQVVGDAKATLAELAPLLKGYQTQFGDRIAVYKAEWLAERTRLQNTKFNREAFTPEIKDQFDQATLNEYADSLQTEFTQTEALITINDTVAPDSIVVCSAGSLPGDLQRLWNPAVPNTYHLEYGYSCMGYEINGALGAKMAAANNQEVYSIVGDGSFCMSHSELLTSLQYGKKINIMLFDNSGFGCINNLQMANGSDSFFCEFRDSDNQIMQVDYAKIAEGYGAKVYRANTKEDLISALEDAKKQTKTTLIDMKVLPKTMSEGYLNWWNVGVSEVSNKESIKQAYEEKQTNLKNARLY.

Thiamine diphosphate is bound at residue E67. A thiamine pyrophosphate binding region spans residues 442–523; sequence SLPGDLQRLW…INIMLFDNSG (82 aa). D494 and N521 together coordinate Mg(2+).

The protein belongs to the TPP enzyme family. The cofactor is Mg(2+). Thiamine diphosphate serves as cofactor.

It catalyses the reaction 3D-3,5/4-trihydroxycyclohexane-1,2-dione + H2O = 5-deoxy-D-glucuronate + H(+). Its pathway is polyol metabolism; myo-inositol degradation into acetyl-CoA; acetyl-CoA from myo-inositol: step 3/7. Functionally, involved in the cleavage of the C1-C2 bond of 3D-(3,5/4)-trihydroxycyclohexane-1,2-dione (THcHDO) to yield 5-deoxy-glucuronate (5DG). In Listeria monocytogenes serovar 1/2a (strain ATCC BAA-679 / EGD-e), this protein is 3D-(3,5/4)-trihydroxycyclohexane-1,2-dione hydrolase.